The chain runs to 407 residues: FK506-binding protein 3 (407 aa).

Disordered stretches follow at residues 46 to 136, 191 to 223, and 236 to 297; these read RIEG…DDEG, DEDELLALGEDDEDDEDELDEGEYDLSPDEDEV, and QDDE…PKLV. Acidic residues-rich tracts occupy residues 65 to 88 and 103 to 136; these read NFDDEDDEDDEDEDDDDEDDEVSA and DGLDEVEGGDDDEDDDEDDEMEFEEDDEDDDDEG. Residues 236-252 show a composition bias toward acidic residues; that stretch reads QDDEDDEDDEDEEEEPV. The segment covering 253–272 has biased composition (basic and acidic residues); that stretch reads VEPKKILKRAAEEKKQEKAA. The 87-residue stretch at 321-407 folds into the PPIase FKBP-type domain; the sequence is GSKVGVRYVG…TFDVKVVNIK (87 aa).

This sequence belongs to the FKBP-type PPIase family. FKBP3/4 subfamily.

Its subcellular location is the nucleus. It localises to the nucleolus. It carries out the reaction [protein]-peptidylproline (omega=180) = [protein]-peptidylproline (omega=0). With respect to regulation, inhibited by both FK506 and rapamycin. In terms of biological role, PPIases accelerate the folding of proteins. It catalyzes the cis-trans isomerization of proline imidic peptide bonds in oligopeptides. The chain is FK506-binding protein 3 (FPR3) from Yarrowia lipolytica (strain CLIB 122 / E 150) (Yeast).